Consider the following 193-residue polypeptide: Putative 3-methyladenine DNA glycosylase (193 aa).

The protein belongs to the DNA glycosylase MPG family.

The chain is Putative 3-methyladenine DNA glycosylase from Francisella tularensis subsp. tularensis (strain FSC 198).